The chain runs to 360 residues: Uroporphyrinogen decarboxylase (360 aa).

Substrate-binding positions include 31 to 35, Asp81, Tyr157, Thr212, and His333; that span reads RQAGR.

The protein belongs to the uroporphyrinogen decarboxylase family. Homodimer.

It localises to the cytoplasm. It catalyses the reaction uroporphyrinogen III + 4 H(+) = coproporphyrinogen III + 4 CO2. It functions in the pathway porphyrin-containing compound metabolism; protoporphyrin-IX biosynthesis; coproporphyrinogen-III from 5-aminolevulinate: step 4/4. In terms of biological role, catalyzes the decarboxylation of four acetate groups of uroporphyrinogen-III to yield coproporphyrinogen-III. This chain is Uroporphyrinogen decarboxylase, found in Janthinobacterium sp. (strain Marseille) (Minibacterium massiliensis).